Consider the following 227-residue polypeptide: 2-C-methyl-D-erythritol 4-phosphate cytidylyltransferase (227 aa).

This sequence belongs to the IspD/TarI cytidylyltransferase family. IspD subfamily.

It catalyses the reaction 2-C-methyl-D-erythritol 4-phosphate + CTP + H(+) = 4-CDP-2-C-methyl-D-erythritol + diphosphate. The protein operates within isoprenoid biosynthesis; isopentenyl diphosphate biosynthesis via DXP pathway; isopentenyl diphosphate from 1-deoxy-D-xylulose 5-phosphate: step 2/6. Functionally, catalyzes the formation of 4-diphosphocytidyl-2-C-methyl-D-erythritol from CTP and 2-C-methyl-D-erythritol 4-phosphate (MEP). The protein is 2-C-methyl-D-erythritol 4-phosphate cytidylyltransferase of Caldanaerobacter subterraneus subsp. tengcongensis (strain DSM 15242 / JCM 11007 / NBRC 100824 / MB4) (Thermoanaerobacter tengcongensis).